Reading from the N-terminus, the 347-residue chain is Calcium homeostasis modulator protein 3 (347 aa).

The Cytoplasmic segment spans residues 1-20; the sequence is MDRFRMLFQHLQSSSESVMN. Positions 9-36 are central pore; that stretch reads QHLQSSSESVMNGICLLLAAVTVKIYSS. The chain crosses the membrane as a helical span at residues 21–36; sequence GICLLLAAVTVKIYSS. Topologically, residues 37-48 are extracellular; it reads LDFNCPCLERYN. 2 disulfides stabilise this stretch: Cys-41/Cys-126 and Cys-43/Cys-157. Residues 49–71 traverse the membrane as a helical segment; that stretch reads ALYGLGLLLTPPLALFLCGLLVN. Topologically, residues 72–98 are cytoplasmic; the sequence is RQSVLMVEEWRRPAGHRRKDLGIIRYM. Cys-99 carries the S-palmitoyl cysteine lipid modification. A helical transmembrane segment spans residues 99-124; sequence CSSVLQRALAAPLVWILLALLDGKCF. The Extracellular segment spans residues 125–176; it reads VCAFSNSVDPEKFLDFANMTPRQVQLFLAKVPCKEDELVKNSPARKAVSRYL. Asn-142 is a glycosylation site (N-linked (GlcNAc...) asparagine). A helical transmembrane segment spans residues 177–202; it reads RCLSQAIGWSITLLVIVVAFLARCLR. Residues Cys-200 and Cys-204 are each lipidated (S-palmitoyl cysteine). Residues 203–347 lie on the Cytoplasmic side of the membrane; sequence PCFDQTVFLQ…GTKLCHQLNV (145 aa). Residues 265 to 290 are disordered; it reads GGIPESQESSEPPELREDRDSGNGKA. The segment covering 277–286 has biased composition (basic and acidic residues); the sequence is PELREDRDSG.

It belongs to the CALHM family. Associates with CALHM1 as a pore-forming subunit in a hetero-hexameric channel complex. Post-translationally, N-glycosylated. In terms of processing, palmitoylated by ZDHHC3 and ZDHHC15. Palmitoylation positively regulates CALHM1:CALHM3 channel conductance. Expressed in taste bud cells.

The protein resides in the basolateral cell membrane. The enzyme catalyses ATP(in) = ATP(out). It carries out the reaction Ca(2+)(in) = Ca(2+)(out). It catalyses the reaction Na(+)(in) = Na(+)(out). The catalysed reaction is K(+)(in) = K(+)(out). The enzyme catalyses chloride(in) = chloride(out). In terms of biological role, pore-forming subunit of gustatory voltage-gated ion channels required for sensory perception of sweet, bitter and umami tastes. With CALHM1 forms a fast-activating voltage-gated ATP-release channel in type II taste bud cells, ATP acting as a neurotransmitter to activate afferent neural gustatory pathways. Acts both as a voltage-gated and calcium-activated ion channel: mediates neuronal excitability in response to membrane depolarization and low extracellular Ca(2+) concentration. Has poor ion selectivity and forms a wide pore (around 14 Angstroms) that mediates permeation of small ions including Ca(2+), Na(+), K(+) and Cl(-), as well as larger ions such as ATP(4-). This Mus musculus (Mouse) protein is Calcium homeostasis modulator protein 3.